Reading from the N-terminus, the 276-residue chain is Probable ABC transporter permease protein NosY (276 aa).

The next 6 helical transmembrane spans lie at 20-40 (WLLA…WLGA), 55-75 (IASL…LLAY), 111-131 (ILAL…ALLV), 146-166 (FMIS…VLSG), 179-199 (LGVW…LLVL), and 251-271 (VLWL…YAIF).

In terms of assembly, the complex may be composed of an ATP-binding protein (NosF), a transmembrane protein (NosY) and a solute-binding protein (NosD).

Its subcellular location is the cell inner membrane. In terms of biological role, required for the assembly of the copper chromophores of nitrous oxide reductase. Could be part of the ABC transporter complex NosDFY. This Stutzerimonas stutzeri (Pseudomonas stutzeri) protein is Probable ABC transporter permease protein NosY.